Consider the following 270-residue polypeptide: 3-phenylpropionate-dihydrodiol/cinnamic acid-dihydrodiol dehydrogenase (270 aa).

10–34 (FITGGGSGLGLALVERFIEEGAQVA) contributes to the NAD(+) binding site. Ser143 contacts substrate. Tyr156 (proton acceptor) is an active-site residue.

It belongs to the short-chain dehydrogenases/reductases (SDR) family.

The catalysed reaction is 3-(cis-5,6-dihydroxycyclohexa-1,3-dien-1-yl)propanoate + NAD(+) = 3-(2,3-dihydroxyphenyl)propanoate + NADH + H(+). The enzyme catalyses (2E)-3-(cis-5,6-dihydroxycyclohexa-1,3-dien-1-yl)prop-2-enoate + NAD(+) = (2E)-3-(2,3-dihydroxyphenyl)prop-2-enoate + NADH + H(+). The protein operates within aromatic compound metabolism; 3-phenylpropanoate degradation. Converts 3-phenylpropionate-dihydrodiol (PP-dihydrodiol) and cinnamic acid-dihydrodiol (CI-dihydrodiol) into 3-(2,3-dihydroxylphenyl)propanoic acid (DHPP) and 2,3-dihydroxicinnamic acid (DHCI), respectively. The sequence is that of 3-phenylpropionate-dihydrodiol/cinnamic acid-dihydrodiol dehydrogenase from Escherichia coli O7:K1 (strain IAI39 / ExPEC).